The following is a 220-amino-acid chain: UPF0758 protein ASA_4229 (220 aa).

The MPN domain occupies 95–220 (EQLQRGDALT…TVSFAERGWL (126 aa)). His-169, His-171, and Asp-182 together coordinate Zn(2+). A JAMM motif motif is present at residues 169–182 (HNHPSGVAEPSRAD).

This sequence belongs to the UPF0758 family.

The sequence is that of UPF0758 protein ASA_4229 from Aeromonas salmonicida (strain A449).